The sequence spans 150 residues: MPGDQVILLSLMALGVVARNALIVTAAGVVLILRVLALERFFPLLERRGLEAGLIFLLIAVLVPFATGEVGWAEIRQSFTSWTGLAAILGGIIAAVLSGYGVTLLQVKPEVIVGMVVGTILGVVLFKGIPVGPLAAAGFTAILLALVRGH.

4 helical membrane-spanning segments follow: residues 13–33 (ALGV…VLIL), 52–72 (AGLI…EVGW), 85–105 (LAAI…VTLL), and 111–131 (VIVG…GIPV).

Belongs to the UPF0756 family.

Its subcellular location is the cell membrane. The polypeptide is UPF0756 membrane protein STH2648 (Symbiobacterium thermophilum (strain DSM 24528 / JCM 14929 / IAM 14863 / T)).